The following is a 275-amino-acid chain: 2,3,4,5-tetrahydropyridine-2,6-dicarboxylate N-succinyltransferase (275 aa).

Positions 106 and 143 each coordinate substrate.

It belongs to the transferase hexapeptide repeat family. As to quaternary structure, homotrimer.

The protein localises to the cytoplasm. It catalyses the reaction (S)-2,3,4,5-tetrahydrodipicolinate + succinyl-CoA + H2O = (S)-2-succinylamino-6-oxoheptanedioate + CoA. It functions in the pathway amino-acid biosynthesis; L-lysine biosynthesis via DAP pathway; LL-2,6-diaminopimelate from (S)-tetrahydrodipicolinate (succinylase route): step 1/3. This is 2,3,4,5-tetrahydropyridine-2,6-dicarboxylate N-succinyltransferase from Cupriavidus necator (strain ATCC 17699 / DSM 428 / KCTC 22496 / NCIMB 10442 / H16 / Stanier 337) (Ralstonia eutropha).